A 47-amino-acid polypeptide reads, in one-letter code: GVPCRCDSDGPSVHGNTLSGTIWVGSCETGWHKCNTEHNLFHECCKQ.

Proline 3 carries the hydroxyproline modification. 3 disulfide bridges follow: cysteine 4–cysteine 44, cysteine 6–cysteine 34, and cysteine 27–cysteine 45.

It belongs to the sea anemone sodium channel inhibitory toxin family. Type I subfamily.

It is found in the secreted. It localises to the nematocyst. Functionally, inhibits voltage-gated sodium channels (Nav). In Radianthus crispa (Leathery sea anemone), this protein is Delta-stichotoxin-Hcr3a.